The chain runs to 975 residues: Importin-11 (975 aa).

At M1 the chain carries N-acetylmethionine. The Importin N-terminal domain occupies 28-100; sequence AEEQLKQWET…RAGLITNFNE (73 aa). HEAT repeat units lie at residues 123–160, 283–317, 318–356, 422–459, 473–509, 511–548, 555–593, 600–636, 640–677, 683–720, 731–773, 819–849, 850–887, and 957–974; these read RQWPELIPTLVESVKVQDDLRQHRALLTFYHVTKTLAS, QHPISFTPLIQRSLEFSVSYVFTEVGEGVTFERFI, VQCMNLIKMIVKNYAYKPSKNFEDSSPETLEAHKIKMAF, QTLTPVLLEMMQTLEGPTNVEDMNALLIKDAVYNAVGL, WFKTQLLPELQVSHNRYKPLRRRVIWLIGQWISVKFK, DLRPMLYEAICNLLQDQDLVVRIETATTLKLTVDDFEF, PYLETMFTLLFQLLQQVTECDTKMHVLHVLSCVIERVNV, GCLVQYLPLLWKQSEEHNMLRCAILTTLIHLVQGLGA, NLYPFLLPVIQLSTDVSQPPHVYLLEDGLELWLVTLEN, PELLRIFQNMSPLLELSSENLRTCFKIINGYIFLSSTE, QSFY…ILPC, QEMDQLLGNVIEMWVDRMDNITQPERKKLSA, LALLSLLPSDNSVIQDKFCGIINISVEALHDVMTEDPE, and METVDTEIVTQLQEFLQG. S343 carries the post-translational modification Phosphoserine.

The protein belongs to the importin beta family. As to quaternary structure, interacts with UBE2E3 and RPL12.

It is found in the cytoplasm. The protein resides in the nucleus. In terms of biological role, functions in nuclear protein import as nuclear transport receptor. Serves as receptor for nuclear localization signals (NLS) in cargo substrates. Is thought to mediate docking of the importin/substrate complex to the nuclear pore complex (NPC) through binding to nucleoporin and the complex is subsequently translocated through the pore by an energy requiring, Ran-dependent mechanism. At the nucleoplasmic side of the NPC, Ran binds to the importin, the importin/substrate complex dissociates and importin is re-exported from the nucleus to the cytoplasm where GTP hydrolysis releases Ran. The directionality of nuclear import is thought to be conferred by an asymmetric distribution of the GTP- and GDP-bound forms of Ran between the cytoplasm and nucleus. Mediates the nuclear import of RPL12, and of UBE2E3. The protein is Importin-11 (Ipo11) of Mus musculus (Mouse).